Here is a 1010-residue protein sequence, read N- to C-terminus: Retinoblastoma-related protein 1 (1010 aa).

The segment at 1–23 (MEGAAPPASSGSEVTGAGSGKVD) is disordered. A domain A region spans residues 419-619 (TPVSTAMTTA…EKGSSMYNSL (201 aa)). Residues 419-861 (TPVSTAMTTA…NEVFIPTVKP (443 aa)) are pocket. The tract at residues 620–730 (IVARPTLSAE…PAAGGELCAE (111 aa)) is spacer. The tract at residues 657–679 (LPPLPFQKQEHSPDKDEVRSPKR) is disordered. The span at 664–679 (KQEHSPDKDEVRSPKR) shows a compositional bias: basic and acidic residues. The tract at residues 731–861 (TGIGVFLSKI…NEVFIPTVKP (131 aa)) is domain B. A disordered region spans residues 868 to 898 (SGTSPNKKNEEKCAADGPYPESPRLSRFPNL).

This sequence belongs to the retinoblastoma protein (RB) family.

Its subcellular location is the nucleus. Functionally, regulator of biological processes that recruits a histone deacetylase to control gene transcription. May play a role in the entry into mitosis, negatively regulating the cell proliferation. Formation of stable complexes with geminiviridae replication-associated proteins may create a cellular environment which favors viral DNA replication. The polypeptide is Retinoblastoma-related protein 1 (RBR1) (Oryza sativa subsp. indica (Rice)).